A 208-amino-acid chain; its full sequence is Glycerol-3-phosphate acyltransferase (208 aa).

5 consecutive transmembrane segments (helical) span residues 4-24 (LALSMIIFAYLLGSISSAVLI), 56-76 (VAVLLCDMLKGTIPVWGGYFL), 80-100 (PFMLGLVAIAACLGHMYPIFF), 117-137 (PIGLDLTAMVMATWLVVVVLF), and 139-159 (YSSLAALVTVLLAPLYTWLIK).

Belongs to the PlsY family. In terms of assembly, probably interacts with PlsX.

It localises to the cell inner membrane. It catalyses the reaction an acyl phosphate + sn-glycerol 3-phosphate = a 1-acyl-sn-glycero-3-phosphate + phosphate. It functions in the pathway lipid metabolism; phospholipid metabolism. Functionally, catalyzes the transfer of an acyl group from acyl-phosphate (acyl-PO(4)) to glycerol-3-phosphate (G3P) to form lysophosphatidic acid (LPA). This enzyme utilizes acyl-phosphate as fatty acyl donor, but not acyl-CoA or acyl-ACP. This Vibrio cholerae serotype O1 (strain ATCC 39541 / Classical Ogawa 395 / O395) protein is Glycerol-3-phosphate acyltransferase.